Here is a 130-residue protein sequence, read N- to C-terminus: Small ribosomal subunit protein uS9 (130 aa).

This sequence belongs to the universal ribosomal protein uS9 family.

The polypeptide is Small ribosomal subunit protein uS9 (Aliivibrio fischeri (strain MJ11) (Vibrio fischeri)).